The following is a 132-amino-acid chain: Small ribosomal subunit protein uS8 (132 aa).

The protein belongs to the universal ribosomal protein uS8 family. As to quaternary structure, part of the 30S ribosomal subunit. Contacts proteins S5 and S12.

Its function is as follows. One of the primary rRNA binding proteins, it binds directly to 16S rRNA central domain where it helps coordinate assembly of the platform of the 30S subunit. The protein is Small ribosomal subunit protein uS8 of Beijerinckia indica subsp. indica (strain ATCC 9039 / DSM 1715 / NCIMB 8712).